Here is a 197-residue protein sequence, read N- to C-terminus: GTP cyclohydrolase-2 (197 aa).

Arg-50–Glu-54 is a binding site for GTP. Cys-55, Cys-66, and Cys-68 together coordinate Zn(2+). GTP is bound by residues Gln-71, Glu-93 to Arg-95, and Thr-115. Residue Asp-127 is the Proton acceptor of the active site. Arg-129 functions as the Nucleophile in the catalytic mechanism. The GTP site is built by Thr-150 and Lys-155.

This sequence belongs to the GTP cyclohydrolase II family. Requires Zn(2+) as cofactor.

It catalyses the reaction GTP + 4 H2O = 2,5-diamino-6-hydroxy-4-(5-phosphoribosylamino)-pyrimidine + formate + 2 phosphate + 3 H(+). Its pathway is cofactor biosynthesis; riboflavin biosynthesis; 5-amino-6-(D-ribitylamino)uracil from GTP: step 1/4. Catalyzes the conversion of GTP to 2,5-diamino-6-ribosylamino-4(3H)-pyrimidinone 5'-phosphate (DARP), formate and pyrophosphate. The chain is GTP cyclohydrolase-2 from Neisseria meningitidis serogroup C (strain 053442).